The sequence spans 311 residues: Aspartate carbamoyltransferase catalytic subunit (311 aa).

Carbamoyl phosphate-binding residues include arginine 55 and threonine 56. Residue lysine 85 participates in L-aspartate binding. Residues arginine 106, histidine 135, and glutamine 138 each contribute to the carbamoyl phosphate site. The L-aspartate site is built by arginine 168 and arginine 230. Residues leucine 268 and proline 269 each contribute to the carbamoyl phosphate site.

It belongs to the aspartate/ornithine carbamoyltransferase superfamily. ATCase family. As to quaternary structure, heterododecamer (2C3:3R2) of six catalytic PyrB chains organized as two trimers (C3), and six regulatory PyrI chains organized as three dimers (R2).

The enzyme catalyses carbamoyl phosphate + L-aspartate = N-carbamoyl-L-aspartate + phosphate + H(+). Its pathway is pyrimidine metabolism; UMP biosynthesis via de novo pathway; (S)-dihydroorotate from bicarbonate: step 2/3. In terms of biological role, catalyzes the condensation of carbamoyl phosphate and aspartate to form carbamoyl aspartate and inorganic phosphate, the committed step in the de novo pyrimidine nucleotide biosynthesis pathway. The polypeptide is Aspartate carbamoyltransferase catalytic subunit (Pectobacterium atrosepticum (strain SCRI 1043 / ATCC BAA-672) (Erwinia carotovora subsp. atroseptica)).